We begin with the raw amino-acid sequence, 515 residues long: Fatty acyl-CoA reductase 1 (515 aa).

The Cytoplasmic segment spans residues methionine 1–asparagine 465. A helical membrane pass occupies residues isoleucine 466–alanine 484. The Peroxisomal segment spans residues arginine 485–tyrosine 515.

The protein belongs to the fatty acyl-CoA reductase family.

It localises to the peroxisome membrane. The enzyme catalyses a long-chain fatty acyl-CoA + 2 NADPH + 2 H(+) = a long-chain primary fatty alcohol + 2 NADP(+) + CoA. It catalyses the reaction hexadecanoyl-CoA + 2 NADPH + 2 H(+) = hexadecan-1-ol + 2 NADP(+) + CoA. The catalysed reaction is octadecanoyl-CoA + 2 NADPH + 2 H(+) = octadecan-1-ol + 2 NADP(+) + CoA. It carries out the reaction (9Z)-octadecenoyl-CoA + 2 NADPH + 2 H(+) = (9Z)-octadecen-1-ol + 2 NADP(+) + CoA. The enzyme catalyses (9Z,12Z)-octadecadienoyl-CoA + 2 NADPH + 2 H(+) = (9Z,12Z)-octadecadien-1-ol + 2 NADP(+) + CoA. It catalyses the reaction eicosanoyl-CoA + 2 NADPH + 2 H(+) = eicosan-1-ol + 2 NADP(+) + CoA. The catalysed reaction is 16-methylheptadecanoyl-CoA + 2 NADPH + 2 H(+) = 16-methylheptadecan-1-ol + 2 NADP(+) + CoA. It carries out the reaction 18-methylnonadecanoyl-CoA + 2 NADPH + 2 H(+) = 18-methylnonadecan-1-ol + 2 NADP(+) + CoA. Its function is as follows. Catalyzes the reduction of saturated and unsaturated C16 or C18 fatty acyl-CoA to fatty alcohols. It plays an essential role in the production of ether lipids/plasmalogens which synthesis requires fatty alcohols. In parallel, it is also required for wax monoesters production since fatty alcohols also constitute a substrate for their synthesis. The sequence is that of Fatty acyl-CoA reductase 1 (far1) from Xenopus laevis (African clawed frog).